Reading from the N-terminus, the 530-residue chain is Autoinducer-2 kinase (530 aa).

The protein belongs to the FGGY kinase family.

The protein localises to the cytoplasm. The enzyme catalyses (S)-4,5-dihydroxypentane-2,3-dione + ATP = (2S)-2-hydroxy-3,4-dioxopentyl phosphate + ADP + H(+). Catalyzes the phosphorylation of autoinducer-2 (AI-2) to phospho-AI-2, which subsequently inactivates the transcriptional regulator LsrR and leads to the transcription of the lsr operon. Phosphorylates the ring-open form of (S)-4,5-dihydroxypentane-2,3-dione (DPD), which is the precursor to all AI-2 signaling molecules, at the C5 position. The polypeptide is Autoinducer-2 kinase (Yersinia pseudotuberculosis serotype O:1b (strain IP 31758)).